A 568-amino-acid polypeptide reads, in one-letter code: Proton-coupled zinc antiporter SLC30A9, mitochondrial (568 aa).

A mitochondrion-targeting transit peptide spans 1–67 (MLPGLAAAAA…IGTLSQVKLY (67 aa)). Helical transmembrane passes span 239-259 (VVMV…LAWI), 314-334 (GVGI…MGLL), 342-362 (LLWA…TLLV), 392-412 (VILL…TCMG), and 424-444 (SLGS…LIYT). Residues 462–466 (LTELL) carry the LXXLL motif motif.

Belongs to the cation diffusion facilitator (CDF) transporter (TC 2.A.4) family. SLC30A subfamily. In terms of assembly, interacts with GRIP1, ESR1 and AR. Ubiquitously expressed in fetal and adult tissues and cancer cell lines.

It is found in the mitochondrion membrane. The protein localises to the nucleus. It localises to the endoplasmic reticulum. It catalyses the reaction Zn(2+)(in) + 2 H(+)(out) = Zn(2+)(out) + 2 H(+)(in). Mitochondrial proton-coupled zinc ion antiporter mediating the export of zinc from the mitochondria and involved in zinc homeostasis, zinc mobilization as well as mitochondrial morphology and health. In nucleus, functions as a secondary coactivator for nuclear receptors by cooperating with p160 coactivators subtypes. Plays a role in transcriptional activation of Wnt-responsive genes. In Homo sapiens (Human), this protein is Proton-coupled zinc antiporter SLC30A9, mitochondrial.